A 500-amino-acid chain; its full sequence is NAD(P)H-quinone oxidoreductase chain 4, chloroplastic (500 aa).

A run of 14 helical transmembrane segments spans residues 4–24 (FPWL…IFFL), 35–55 (YTIC…CYHF), 87–107 (IGPV…AWPV), 113–130 (LFHF…GSFS), 134–154 (LLLF…LLSM), 167–187 (FILY…GVGL), 207–227 (VALE…KLPI), 242–262 (HYST…YGLI), 272–292 (AHSI…IYAA), 305–325 (IAYS…SITD), 330–350 (GAIL…FLAG), 386–406 (LALP…GIIT), 416–436 (IVIT…LLSM), and 462–482 (LFVS…PDFV).

This sequence belongs to the complex I subunit 4 family.

It localises to the plastid. Its subcellular location is the chloroplast thylakoid membrane. The enzyme catalyses a plastoquinone + NADH + (n+1) H(+)(in) = a plastoquinol + NAD(+) + n H(+)(out). The catalysed reaction is a plastoquinone + NADPH + (n+1) H(+)(in) = a plastoquinol + NADP(+) + n H(+)(out). This chain is NAD(P)H-quinone oxidoreductase chain 4, chloroplastic, found in Guizotia abyssinica (Niger).